The primary structure comprises 407 residues: FMN-dependent alpha-hydroxy acid dehydrogenase PB1A11.03 (407 aa).

In terms of domain architecture, FMN hydroxy acid dehydrogenase spans 28-406 (QRPQITVDGR…DLNRDVLYKE (379 aa)). Residue Tyr-54 coordinates a 2-oxocarboxylate. Residues Ser-136 and Gln-158 each coordinate FMN. A 2-oxocarboxylate is bound at residue Tyr-160. Thr-188 contributes to the FMN binding site. Arg-197 lines the a 2-oxocarboxylate pocket. FMN is bound at residue Lys-277. His-301 (proton acceptor) is an active-site residue. Arg-304 is an a 2-oxocarboxylate binding site. FMN is bound by residues 332 to 336 (DSGVR) and 355 to 356 (GR).

This sequence belongs to the FMN-dependent alpha-hydroxy acid dehydrogenase family. FMN is required as a cofactor.

Its subcellular location is the cytoplasm. It is found in the nucleus. This is FMN-dependent alpha-hydroxy acid dehydrogenase PB1A11.03 from Schizosaccharomyces pombe (strain 972 / ATCC 24843) (Fission yeast).